The following is a 155-amino-acid chain: MRSIRIIAVGRLKTAHWKTAAEHYLTRLTRAFKVEETIIKDGNAALPPLERNAQEGARIVAALTPADLAVCMDETGRQFTSQQFSAFLTPMWENANLRPCFIIGGAYGLSDEVRGKARHTMALSAMTFPHEMARVVLYEQLYRADAILRGTPYHH.

S-adenosyl-L-methionine is bound by residues Gly-104 and 123-128 (LSAMTF).

Belongs to the RNA methyltransferase RlmH family. Homodimer.

It localises to the cytoplasm. The catalysed reaction is pseudouridine(1915) in 23S rRNA + S-adenosyl-L-methionine = N(3)-methylpseudouridine(1915) in 23S rRNA + S-adenosyl-L-homocysteine + H(+). Its function is as follows. Specifically methylates the pseudouridine at position 1915 (m3Psi1915) in 23S rRNA. The chain is Ribosomal RNA large subunit methyltransferase H from Oleidesulfovibrio alaskensis (strain ATCC BAA-1058 / DSM 17464 / G20) (Desulfovibrio alaskensis).